Here is a 450-residue protein sequence, read N- to C-terminus: C4-dicarboxylate transport protein (450 aa).

The next 8 membrane-spanning stretches (helical) occupy residues 25–45, 56–76, 90–110, 162–182, 200–220, 234–254, 319–339, and 367–387; these read VVFA…YGAA, LIKM…IASM, MAYF…VANV, ILQV…VGDA, LVNI…AFTI, LVLT…GAVA, IYMT…LTLG, and AATL…ILGV.

It belongs to the dicarboxylate/amino acid:cation symporter (DAACS) (TC 2.A.23) family.

It localises to the cell inner membrane. Its function is as follows. Responsible for the transport of dicarboxylates such as succinate, fumarate, and malate from the periplasm across the membrane. The protein is C4-dicarboxylate transport protein of Acidovorax ebreus (strain TPSY) (Diaphorobacter sp. (strain TPSY)).